Consider the following 128-residue polypeptide: S-adenosylmethionine decarboxylase proenzyme (128 aa).

The active-site Schiff-base intermediate with substrate; via pyruvic acid is the Ser61. Position 61 is a pyruvic acid (Ser); by autocatalysis (Ser61). His66 functions as the Proton acceptor; for processing activity in the catalytic mechanism. The Proton donor; for catalytic activity role is filled by Cys81.

The protein belongs to the prokaryotic AdoMetDC family. Type 1 subfamily. In terms of assembly, heterotetramer of two alpha and two beta chains arranged as a dimer of alpha/beta heterodimers. Pyruvate serves as cofactor. Is synthesized initially as an inactive proenzyme. Formation of the active enzyme involves a self-maturation process in which the active site pyruvoyl group is generated from an internal serine residue via an autocatalytic post-translational modification. Two non-identical subunits are generated from the proenzyme in this reaction, and the pyruvate is formed at the N-terminus of the alpha chain, which is derived from the carboxyl end of the proenzyme. The post-translation cleavage follows an unusual pathway, termed non-hydrolytic serinolysis, in which the side chain hydroxyl group of the serine supplies its oxygen atom to form the C-terminus of the beta chain, while the remainder of the serine residue undergoes an oxidative deamination to produce ammonia and the pyruvoyl group blocking the N-terminus of the alpha chain.

It carries out the reaction S-adenosyl-L-methionine + H(+) = S-adenosyl 3-(methylsulfanyl)propylamine + CO2. Its pathway is amine and polyamine biosynthesis; S-adenosylmethioninamine biosynthesis; S-adenosylmethioninamine from S-adenosyl-L-methionine: step 1/1. Its function is as follows. Catalyzes the decarboxylation of S-adenosylmethionine to S-adenosylmethioninamine (dcAdoMet), the propylamine donor required for the synthesis of the polyamines spermine and spermidine from the diamine putrescine. This Parasynechococcus marenigrum (strain WH8102) protein is S-adenosylmethionine decarboxylase proenzyme.